A 256-amino-acid chain; its full sequence is Type III pantothenate kinase (256 aa).

7 to 14 (DIGNTNVV) is an ATP binding site. 108-111 (GADC) is a binding site for substrate. Asp-110 serves as the catalytic Proton acceptor. Residue Asp-130 participates in K(+) binding. Residue Thr-133 participates in ATP binding. Thr-185 is a substrate binding site.

The protein belongs to the type III pantothenate kinase family. Homodimer. NH4(+) is required as a cofactor. K(+) serves as cofactor.

The protein localises to the cytoplasm. The catalysed reaction is (R)-pantothenate + ATP = (R)-4'-phosphopantothenate + ADP + H(+). The protein operates within cofactor biosynthesis; coenzyme A biosynthesis; CoA from (R)-pantothenate: step 1/5. Catalyzes the phosphorylation of pantothenate (Pan), the first step in CoA biosynthesis. In Bifidobacterium adolescentis (strain ATCC 15703 / DSM 20083 / NCTC 11814 / E194a), this protein is Type III pantothenate kinase.